A 325-amino-acid chain; its full sequence is MRRYSRIIGTGSYLPPRRLTNADLVAELGQRGIETSDEWIVERTGIRARHFAAPDVSSSDLALQAARLALQAAGLQATDIDLIIVATSTPDMVFPAAACILQNKLGANGCPAFDLQAVCSGFVYALSVADSMVRAGAANCALVVGAEVFSRILDFNDRTTCVLFGDGAGAVVLQASATPGILCSDLKADGKHVGILCVPGNVSGGQVLGDPVLKMDGQAVFKLAIGVLEQAAHAVLAKAGLKPADVDWLIPHQANIRIMQGTARRLKMGMDKMVVTLDQHGNTSAASIPLALDHAVRMGRVKPGQTLLLQAVGGGFTWGAVLLKL.

Residues cysteine 119 and histidine 252 contribute to the active site. Residues 253-257 form an ACP-binding region; the sequence is QANIR. Asparagine 282 is an active-site residue.

The protein belongs to the thiolase-like superfamily. FabH family. In terms of assembly, homodimer.

Its subcellular location is the cytoplasm. It carries out the reaction malonyl-[ACP] + acetyl-CoA + H(+) = 3-oxobutanoyl-[ACP] + CO2 + CoA. The protein operates within lipid metabolism; fatty acid biosynthesis. In terms of biological role, catalyzes the condensation reaction of fatty acid synthesis by the addition to an acyl acceptor of two carbons from malonyl-ACP. Catalyzes the first condensation reaction which initiates fatty acid synthesis and may therefore play a role in governing the total rate of fatty acid production. Possesses both acetoacetyl-ACP synthase and acetyl transacylase activities. Its substrate specificity determines the biosynthesis of branched-chain and/or straight-chain of fatty acids. In Verminephrobacter eiseniae (strain EF01-2), this protein is Beta-ketoacyl-[acyl-carrier-protein] synthase III.